The following is a 538-amino-acid chain: Lipid scramblase CLPTM1L (538 aa).

At 1 to 10 the chain is on the cytoplasmic side; sequence MWSGRSSFTS. A helical membrane pass occupies residues 11-31; the sequence is LVVGVFVVYVVHTCWVMYGIV. The Extracellular portion of the chain corresponds to 32–284; sequence YTRPCSGDAN…VKGIFVDTNL (253 aa). Residues Asn-91 and Asn-101 are each glycosylated (N-linked (GlcNAc...) asparagine). The chain crosses the membrane as a helical span at residues 285–305; sequence YFLALTFFVAAFHLLFDFLAF. Topologically, residues 306–324 are cytoplasmic; it reads KNDISFWKKKKSMIGMSTK. The chain crosses the membrane as a helical span at residues 325-342; sequence AVLWRCFSTVVIFLFLLD. Residues 343-346 lie on the Extracellular side of the membrane; sequence EQTS. A helical membrane pass occupies residues 347–364; that stretch reads LLVLVPAGVGAAIELWKV. Residues 365–402 lie on the Cytoplasmic side of the membrane; that stretch reads KKALKMTILWRGLMPEFELGTYSESERKTEEYDTQAMK. A helical membrane pass occupies residues 403-423; the sequence is YLSYLLYPLCVGGAVYSLLNI. At 424–428 the chain is on the extracellular side; the sequence is KYKSW. Residues 429–449 form a helical membrane-spanning segment; it reads YSWLINSFVNGVYAFGFLFML. The Cytoplasmic portion of the chain corresponds to 450-538; the sequence is PQLFVNYKLK…EKAARAPHTD (89 aa).

This sequence belongs to the CLPTM1 family.

The protein localises to the endoplasmic reticulum membrane. It catalyses the reaction a 6-(alpha-D-glucosaminyl)-1-(1,2-diacyl-sn-glycero-3-phospho)-1D-myo-inositol(in) = a 6-(alpha-D-glucosaminyl)-1-(1,2-diacyl-sn-glycero-3-phospho)-1D-myo-inositol(out). The enzyme catalyses 6-(alpha-D-glucosaminyl)-(1-octadecanoyl,2-(9Z)-octadecenoyl-sn-glycero-3-phospho)-1D-myo-inositol(in) = 6-(alpha-D-glucosaminyl)-(1-octadecanoyl,2-(9Z)-octadecenoyl-sn-glycero-3-phospho)-1D-myo-inositol(out). The catalysed reaction is a 1,2-diacyl-sn-glycero-3-phospho-(1D-myo-inositol)(in) = a 1,2-diacyl-sn-glycero-3-phospho-(1D-myo-inositol)(out). It carries out the reaction a 1,2-diacyl-sn-glycero-3-phosphocholine(in) = a 1,2-diacyl-sn-glycero-3-phosphocholine(out). It catalyses the reaction a 1,2-diacyl-sn-glycero-3-phosphoethanolamine(in) = a 1,2-diacyl-sn-glycero-3-phosphoethanolamine(out). Scramblase that mediates the translocation of glucosaminylphosphatidylinositol (alpha-D-GlcN-(1-6)-(1,2-diacyl-sn-glycero-3-phospho)-1D-myo-inositol, GlcN-PI) across the endoplasmic reticulum (ER) membrane, from the cytosolic leaflet to the luminal leaflet of the ER membrane, where it participates in the biosynthesis of glycosylphosphatidylinositol (GPI). GPI is a lipid glycoconjugate involved in post-translational modification of proteins. Can also translocate 1,2-diacyl-sn-glycero-3-phospho-(1D-myo-inositol) (phosphatidylinositol or PI), as well as several other phospholipids (1,2-diacyl-sn-glycero-3-phosphocholine, 1,2-diacyl-sn-glycero-3-phosphoethanolamine), and N-acetylglucosaminylphosphatidylinositol (GlcNAc-PI) in vitro. The polypeptide is Lipid scramblase CLPTM1L (CLPTM1L) (Pongo abelii (Sumatran orangutan)).